The following is a 387-amino-acid chain: MKKEKADKALEKETDQRKQAIDAALGQIEKQFGKGSIMRLGADTRMSEMNVVSTGSLDLDIALGIGGFPSGRIIEIYGPESSGKTTLTLSAIAETQKKGGIAAFIDAEHALDPSYAKKLGVNVDDLLVAQPDNGEEALEICESLVRSNAIDLIVIDSVAALVPKAEIEGDMGDSHMGLQARLMSQALRKLTGTISKSSTTVIFINQIRMKIGVMFGSPETTTGGNALKFYASIRLDIRRIETLKEKEEPVGNRVRVKVVKNKCAPPFRQAEFDIMYANGINRESSLIDLAVRHDLVAKAGSWYSYNGEKIGQGKEQVRNFFLENPDIAFKIENQVRDLNALPLLDQAKIQTREVKSIERDTKETKETKSKQPVSFSTEADGDIAVGE.

Gly78–Thr85 lines the ATP pocket. The span at Lys355–Ser369 shows a compositional bias: basic and acidic residues. Positions Lys355–Glu387 are disordered.

The protein belongs to the RecA family.

Its subcellular location is the cytoplasm. Its function is as follows. Can catalyze the hydrolysis of ATP in the presence of single-stranded DNA, the ATP-dependent uptake of single-stranded DNA by duplex DNA, and the ATP-dependent hybridization of homologous single-stranded DNAs. It interacts with LexA causing its activation and leading to its autocatalytic cleavage. The polypeptide is Protein RecA (Leptospira biflexa serovar Patoc (strain Patoc 1 / ATCC 23582 / Paris)).